Here is a 318-residue protein sequence, read N- to C-terminus: Biotin synthase (318 aa).

The 230-residue stretch at 44-273 folds into the Radical SAM core domain; that stretch reads LCGKKFNLCT…EKQIRLAGGR (230 aa). Residues Cys62, Cys66, and Cys69 each coordinate [4Fe-4S] cluster. Residues Ser106, Cys138, Cys198, and Arg268 each contribute to the [2Fe-2S] cluster site.

This sequence belongs to the radical SAM superfamily. Biotin synthase family. In terms of assembly, homodimer. [4Fe-4S] cluster is required as a cofactor. [2Fe-2S] cluster serves as cofactor.

The catalysed reaction is (4R,5S)-dethiobiotin + (sulfur carrier)-SH + 2 reduced [2Fe-2S]-[ferredoxin] + 2 S-adenosyl-L-methionine = (sulfur carrier)-H + biotin + 2 5'-deoxyadenosine + 2 L-methionine + 2 oxidized [2Fe-2S]-[ferredoxin]. It participates in cofactor biosynthesis; biotin biosynthesis; biotin from 7,8-diaminononanoate: step 2/2. In terms of biological role, catalyzes the conversion of dethiobiotin (DTB) to biotin by the insertion of a sulfur atom into dethiobiotin via a radical-based mechanism. This is Biotin synthase from Clostridium botulinum (strain Alaska E43 / Type E3).